A 239-amino-acid polypeptide reads, in one-letter code: tRNA (guanine-N(7)-)-methyltransferase (239 aa).

Residues glutamate 68, glutamate 93, aspartate 120, and aspartate 143 each coordinate S-adenosyl-L-methionine. The active site involves aspartate 143. Substrate is bound by residues lysine 147, aspartate 180, and 217 to 220 (TKFE).

Belongs to the class I-like SAM-binding methyltransferase superfamily. TrmB family.

It carries out the reaction guanosine(46) in tRNA + S-adenosyl-L-methionine = N(7)-methylguanosine(46) in tRNA + S-adenosyl-L-homocysteine. Its pathway is tRNA modification; N(7)-methylguanine-tRNA biosynthesis. In terms of biological role, catalyzes the formation of N(7)-methylguanine at position 46 (m7G46) in tRNA. This is tRNA (guanine-N(7)-)-methyltransferase from Vibrio parahaemolyticus serotype O3:K6 (strain RIMD 2210633).